Here is a 372-residue protein sequence, read N- to C-terminus: MTALNHTPLNAAHRALNARMVDFGGWDMPVNYGSQIEEHEAVRTDAGMFDVSHMCVVDFTGSRVRAFFEHAIANNVGKLKTPGKALYSCLLNPQGGVIDDLIVYYFTEDFFRVVVNAGTAEKDIAWFNQLNEQGGYGLTIAPRRDFAIVAVQGPNAREKVWTTVPAARAATSELKPFNAARVAGTPFGELTVARTGYTGEDGFEVIVPAVHVEALWTALQQNGVRPCGLGARDTLRLEAGMNLYGQDMDETVSPLDAGLAWTVDLSAPRDFVGRDALERDGTRAAFVGLILQKENGKAGGVLRAHQKVVTPHGEGEITSGTFSPSMQESIAFARVPAAVHVGDTIHVQIRDKQLPARVVKLPFVRNGKVLAA.

Belongs to the GcvT family. The glycine cleavage system is composed of four proteins: P, T, L and H.

It catalyses the reaction N(6)-[(R)-S(8)-aminomethyldihydrolipoyl]-L-lysyl-[protein] + (6S)-5,6,7,8-tetrahydrofolate = N(6)-[(R)-dihydrolipoyl]-L-lysyl-[protein] + (6R)-5,10-methylene-5,6,7,8-tetrahydrofolate + NH4(+). Its function is as follows. The glycine cleavage system catalyzes the degradation of glycine. The polypeptide is Aminomethyltransferase (Burkholderia ambifaria (strain MC40-6)).